The sequence spans 287 residues: Pantothenate synthetase (287 aa).

37 to 44 (MGALHEGH) contacts ATP. H44 functions as the Proton donor in the catalytic mechanism. Position 68 (Q68) interacts with (R)-pantoate. Beta-alanine is bound at residue Q68. 154–157 (GQKD) serves as a coordination point for ATP. Position 160 (Q160) interacts with (R)-pantoate. ATP contacts are provided by residues V183 and 191-194 (LSSR).

It belongs to the pantothenate synthetase family. As to quaternary structure, homodimer.

Its subcellular location is the cytoplasm. The enzyme catalyses (R)-pantoate + beta-alanine + ATP = (R)-pantothenate + AMP + diphosphate + H(+). It participates in cofactor biosynthesis; (R)-pantothenate biosynthesis; (R)-pantothenate from (R)-pantoate and beta-alanine: step 1/1. Functionally, catalyzes the condensation of pantoate with beta-alanine in an ATP-dependent reaction via a pantoyl-adenylate intermediate. This is Pantothenate synthetase from Leifsonia xyli subsp. xyli (strain CTCB07).